A 359-amino-acid polypeptide reads, in one-letter code: MMP endo-(1,4)-3-O-methyl-alpha-D-mannosidase (359 aa).

As to quaternary structure, monomer in solution.

It carries out the reaction Endohydrolysis of 3-O-methyl-alpha-D-mannosyl-(1-&gt;4)-3-O-methyl-D-mannose linkages within (1,4)-3-O-methyl-alpha-D-mannnan substrates.. Functionally, hydrolase involved in the biosynthesis of 3-O-methylmannose polysaccharides (MMP), which are intracellular polymethylated polysaccharides implicated in the modulation of fatty acid metabolism in non-tuberculous mycobacteria. Highly specific hydrolase that catalyzes the internal cleavage of MMP. Is able to hydrolyze purified MMP into distinct lower order oligomannosides but does not cleave acylated or deacylated forms of 6-O-methylglucose lipopolysaccharide (MGLP), beta-mannans, synthetic 4alpha-oligomannosides or its own reaction products. Products were identified as four distinct oligomannosides differing in the number of mannose units (4 to 8) and methylation pattern (free or methylated C1-OH). Might serve as a recycling enzyme that hydrolyzes mature MMP into defined-size smaller oligomannosides that are, in turn, substrates for ManT and MeT1 activities for further processing into new daughter MMP chains. The chain is MMP endo-(1,4)-3-O-methyl-alpha-D-mannosidase from Mycolicibacterium hassiacum (strain DSM 44199 / CIP 105218 / JCM 12690 / 3849) (Mycobacterium hassiacum).